Here is a 315-residue protein sequence, read N- to C-terminus: Lipoyl synthase (315 aa).

[4Fe-4S] cluster is bound by residues Cys-62, Cys-67, Cys-73, Cys-88, Cys-92, Cys-95, and Ser-302. Residues 73-291 enclose the Radical SAM core domain; that stretch reads CFGHGTATFM…GELAKKLGFS (219 aa).

Belongs to the radical SAM superfamily. Lipoyl synthase family. [4Fe-4S] cluster is required as a cofactor.

Its subcellular location is the cytoplasm. The enzyme catalyses [[Fe-S] cluster scaffold protein carrying a second [4Fe-4S](2+) cluster] + N(6)-octanoyl-L-lysyl-[protein] + 2 oxidized [2Fe-2S]-[ferredoxin] + 2 S-adenosyl-L-methionine + 4 H(+) = [[Fe-S] cluster scaffold protein] + N(6)-[(R)-dihydrolipoyl]-L-lysyl-[protein] + 4 Fe(3+) + 2 hydrogen sulfide + 2 5'-deoxyadenosine + 2 L-methionine + 2 reduced [2Fe-2S]-[ferredoxin]. Its pathway is protein modification; protein lipoylation via endogenous pathway; protein N(6)-(lipoyl)lysine from octanoyl-[acyl-carrier-protein]: step 2/2. Functionally, catalyzes the radical-mediated insertion of two sulfur atoms into the C-6 and C-8 positions of the octanoyl moiety bound to the lipoyl domains of lipoate-dependent enzymes, thereby converting the octanoylated domains into lipoylated derivatives. The polypeptide is Lipoyl synthase (Coxiella burnetii (strain Dugway 5J108-111)).